The chain runs to 134 residues: 6,7-dimethyl-8-ribityllumazine synthase (134 aa).

Residues phenylalanine 12, 44-46 (VFD), and 68-70 (SVI) contribute to the 5-amino-6-(D-ribitylamino)uracil site. A (2S)-2-hydroxy-3-oxobutyl phosphate-binding site is contributed by 73 to 74 (ET). Histidine 76 functions as the Proton donor in the catalytic mechanism. Leucine 101 contacts 5-amino-6-(D-ribitylamino)uracil. (2S)-2-hydroxy-3-oxobutyl phosphate is bound at residue arginine 116.

Belongs to the DMRL synthase family.

It catalyses the reaction (2S)-2-hydroxy-3-oxobutyl phosphate + 5-amino-6-(D-ribitylamino)uracil = 6,7-dimethyl-8-(1-D-ribityl)lumazine + phosphate + 2 H2O + H(+). The protein operates within cofactor biosynthesis; riboflavin biosynthesis; riboflavin from 2-hydroxy-3-oxobutyl phosphate and 5-amino-6-(D-ribitylamino)uracil: step 1/2. Catalyzes the formation of 6,7-dimethyl-8-ribityllumazine by condensation of 5-amino-6-(D-ribitylamino)uracil with 3,4-dihydroxy-2-butanone 4-phosphate. This is the penultimate step in the biosynthesis of riboflavin. The chain is 6,7-dimethyl-8-ribityllumazine synthase from Methanosarcina mazei (strain ATCC BAA-159 / DSM 3647 / Goe1 / Go1 / JCM 11833 / OCM 88) (Methanosarcina frisia).